We begin with the raw amino-acid sequence, 1213 residues long: DNA-directed RNA polymerase subunit beta' (1213 aa).

Residues Cys-60, Cys-62, Cys-75, and Cys-78 each contribute to the Zn(2+) site. The Mg(2+) site is built by Asp-450, Asp-452, and Asp-454. Positions 819, 893, 900, and 903 each coordinate Zn(2+).

Belongs to the RNA polymerase beta' chain family. As to quaternary structure, the RNAP catalytic core consists of 2 alpha, 1 beta, 1 beta' and 1 omega subunit. When a sigma factor is associated with the core the holoenzyme is formed, which can initiate transcription. Mg(2+) is required as a cofactor. Zn(2+) serves as cofactor.

The catalysed reaction is RNA(n) + a ribonucleoside 5'-triphosphate = RNA(n+1) + diphosphate. DNA-dependent RNA polymerase catalyzes the transcription of DNA into RNA using the four ribonucleoside triphosphates as substrates. This is DNA-directed RNA polymerase subunit beta' from Streptococcus pyogenes serotype M4 (strain MGAS10750).